The sequence spans 351 residues: Glycerol-3-phosphate dehydrogenase 1-like protein (351 aa).

Position 12 to 17 (12 to 17 (GSGNWG)) interacts with NAD(+). A substrate-binding site is contributed by K122. A155 serves as a coordination point for NAD(+). Catalysis depends on K206, which acts as the Proton acceptor. NAD(+) is bound by residues R271, K298, and Q300. Position 271–272 (271–272 (RN)) interacts with substrate.

This sequence belongs to the NAD-dependent glycerol-3-phosphate dehydrogenase family. In terms of assembly, interacts with SCN5A.

Its subcellular location is the cytoplasm. The enzyme catalyses sn-glycerol 3-phosphate + NAD(+) = dihydroxyacetone phosphate + NADH + H(+). In terms of biological role, plays a role in regulating cardiac sodium current; decreased enzymatic activity with resulting increased levels of glycerol 3-phosphate activating the DPD1L-dependent SCN5A phosphorylation pathway, may ultimately lead to decreased sodium current; cardiac sodium current may also be reduced due to alterations of NAD(H) balance induced by DPD1L. The protein is Glycerol-3-phosphate dehydrogenase 1-like protein (Gpd1l) of Mus musculus (Mouse).